The sequence spans 225 residues: NAD(P)H-quinone oxidoreductase subunit K, chloroplastic (225 aa).

Residues C43, C44, C108, and C139 each contribute to the [4Fe-4S] cluster site.

It belongs to the complex I 20 kDa subunit family. NDH is composed of at least 16 different subunits, 5 of which are encoded in the nucleus. [4Fe-4S] cluster serves as cofactor.

It localises to the plastid. The protein localises to the chloroplast thylakoid membrane. It carries out the reaction a plastoquinone + NADH + (n+1) H(+)(in) = a plastoquinol + NAD(+) + n H(+)(out). It catalyses the reaction a plastoquinone + NADPH + (n+1) H(+)(in) = a plastoquinol + NADP(+) + n H(+)(out). NDH shuttles electrons from NAD(P)H:plastoquinone, via FMN and iron-sulfur (Fe-S) centers, to quinones in the photosynthetic chain and possibly in a chloroplast respiratory chain. The immediate electron acceptor for the enzyme in this species is believed to be plastoquinone. Couples the redox reaction to proton translocation, and thus conserves the redox energy in a proton gradient. In Populus trichocarpa (Western balsam poplar), this protein is NAD(P)H-quinone oxidoreductase subunit K, chloroplastic.